Here is a 353-residue protein sequence, read N- to C-terminus: uncharacterized protein (353 aa).

Disordered stretches follow at residues 1 to 24 (MSTS…QQSQ), 245 to 280 (NKSS…EKVP), and 305 to 353 (AAGK…DLNN). The segment covering 9–24 (NKKNNTKQQKYQQQSQ) has biased composition (low complexity). A compositionally biased stretch (basic and acidic residues) spans 254–280 (KSGDKSTVKSTDKQVEKKVEESSEKVP). Residues 321–332 (VTTSTSESTVEV) are compositionally biased toward low complexity. Over residues 342-353 (EPDEEVFEDLNN) the composition is skewed to acidic residues.

This is an uncharacterized protein from Acanthamoeba polyphaga mimivirus (APMV).